The chain runs to 653 residues: MFSSSILTIISSIDNFITIIVNNLKKWWSDITLQTRIMAMTTLMVSLLMSSLPSGLKLISKQETRLVDNRFGKDLSLLLAVNITPILEGNNYLQLQQFIEHFYLSTSSIRYILVFNAEGQIYYSIPFSSETVVNLFSLSDYECLRSEIYYFSNTPIVNTPNHLEGEIIDIIIPLNKEKKLLGVLNIGINSNPTLTTSSQLTRDVSVAVFVSIWLMVILGAAFNAFTITKPIRELLTGVKNIASGDFHQRISLPFGGELGALIFNFNEMAERLEKYEQQNVEKLTSEKAKLETLVSTIADGAILLDKDLRVILVNRTAIENFGWEGKDIAGSMIIDYLPEDINQQLFPALNDIVRKNFLEQSLCETQEICIKLQKNYKKTFRVLLTTVLDYKYSILKGIAITIQDRTEEVELNEVKNQFISNVSHELRTPLFNIRSFLETLYEYHDSLDNRQKLEFLAIANKETERLTRLVNDVLDLSRLESDQEYPLQSMDLVSAIEQTVRTYQLSAKDKKIDLHIDIEENLPCILGNYSLVLQILANLIGNSLKFTHSDGIIVLRTYRINDSASKLNSTPLQIQKVRVEICDTGIGISKKNQERIFARFLRIENYVHTLEGTGLGLSIVKNIIQKHNSEIHLYSELKNGSCFFFDLIIAKDT.

2 helical membrane passes run 39-59 (AMTT…LKLI) and 207-227 (AVFV…AFTI). The region spanning 225 to 277 (FTITKPIRELLTGVKNIASGDFHQRISLPFGGELGALIFNFNEMAERLEKYEQ) is the HAMP domain. In terms of domain architecture, PAS spans 286 to 356 (EKAKLETLVS…PALNDIVRKN (71 aa)). One can recognise a Histidine kinase domain in the interval 421–651 (NVSHELRTPL…CFFFDLIIAK (231 aa)). H424 is subject to Phosphohistidine; by autocatalysis.

It localises to the plastid. The protein resides in the chloroplast membrane. It carries out the reaction ATP + protein L-histidine = ADP + protein N-phospho-L-histidine.. This is an uncharacterized protein from Pyropia yezoensis (Susabi-nori).